The chain runs to 171 residues: Peptide deformylase (171 aa).

Fe cation-binding residues include Cys-91 and His-133. Residue Glu-134 is part of the active site. His-137 serves as a coordination point for Fe cation.

It belongs to the polypeptide deformylase family. Requires Fe(2+) as cofactor.

The catalysed reaction is N-terminal N-formyl-L-methionyl-[peptide] + H2O = N-terminal L-methionyl-[peptide] + formate. Its function is as follows. Removes the formyl group from the N-terminal Met of newly synthesized proteins. Requires at least a dipeptide for an efficient rate of reaction. N-terminal L-methionine is a prerequisite for activity but the enzyme has broad specificity at other positions. The protein is Peptide deformylase of Edwardsiella ictaluri (strain 93-146).